The primary structure comprises 347 residues: N-acetyl-gamma-glutamyl-phosphate reductase (347 aa).

Cys152 is an active-site residue.

This sequence belongs to the NAGSA dehydrogenase family. Type 1 subfamily.

It is found in the cytoplasm. It carries out the reaction N-acetyl-L-glutamate 5-semialdehyde + phosphate + NADP(+) = N-acetyl-L-glutamyl 5-phosphate + NADPH + H(+). Its pathway is amino-acid biosynthesis; L-arginine biosynthesis; N(2)-acetyl-L-ornithine from L-glutamate: step 3/4. Its function is as follows. Catalyzes the NADPH-dependent reduction of N-acetyl-5-glutamyl phosphate to yield N-acetyl-L-glutamate 5-semialdehyde. The sequence is that of N-acetyl-gamma-glutamyl-phosphate reductase from Neisseria meningitidis serogroup C / serotype 2a (strain ATCC 700532 / DSM 15464 / FAM18).